The sequence spans 262 residues: Phosphatidylglycerol--prolipoprotein diacylglyceryl transferase (262 aa).

4 helical membrane-spanning segments follow: residues 17 to 37 (LAIHWYGLMYLIGFALVYALG), 57 to 77 (LIFYSVLGVVLGGRLGYVLFY), 95 to 115 (GGMSFHGGLIGVIVVMLLFAH), and 119 to 139 (LGFFTVSDFIAPLIPLGLAAG). Arginine 140 is an a 1,2-diacyl-sn-glycero-3-phospho-(1'-sn-glycerol) binding site. 3 helical membrane-spanning segments follow: residues 173 to 193 (PSQLYELGLEGIVLFALLWWY), 200 to 220 (AGQVSAMFLMGYGAFRFLVEF), and 227 to 247 (FLGLLAAGLSMGQWLSIPMVL).

Belongs to the Lgt family.

It is found in the cell inner membrane. The catalysed reaction is L-cysteinyl-[prolipoprotein] + a 1,2-diacyl-sn-glycero-3-phospho-(1'-sn-glycerol) = an S-1,2-diacyl-sn-glyceryl-L-cysteinyl-[prolipoprotein] + sn-glycerol 1-phosphate + H(+). Its pathway is protein modification; lipoprotein biosynthesis (diacylglyceryl transfer). In terms of biological role, catalyzes the transfer of the diacylglyceryl group from phosphatidylglycerol to the sulfhydryl group of the N-terminal cysteine of a prolipoprotein, the first step in the formation of mature lipoproteins. This chain is Phosphatidylglycerol--prolipoprotein diacylglyceryl transferase, found in Bordetella parapertussis (strain 12822 / ATCC BAA-587 / NCTC 13253).